We begin with the raw amino-acid sequence, 386 residues long: Ferrochelatase (386 aa).

2 residues coordinate Fe cation: His-196 and Glu-277.

Belongs to the ferrochelatase family.

It is found in the cytoplasm. The catalysed reaction is heme b + 2 H(+) = protoporphyrin IX + Fe(2+). The protein operates within porphyrin-containing compound metabolism; protoheme biosynthesis; protoheme from protoporphyrin-IX: step 1/1. Functionally, catalyzes the ferrous insertion into protoporphyrin IX. The sequence is that of Ferrochelatase from Picosynechococcus sp. (strain ATCC 27264 / PCC 7002 / PR-6) (Agmenellum quadruplicatum).